A 46-amino-acid polypeptide reads, in one-letter code: Large ribosomal subunit protein bL36A (46 aa).

The protein belongs to the bacterial ribosomal protein bL36 family.

The protein is Large ribosomal subunit protein bL36A of Sodalis glossinidius (strain morsitans).